The primary structure comprises 45 residues: Conotoxin reg3.12 (45 aa).

Residues 1 to 31 (DQPVERHAGNKRHLNPTIRRAMIIDANRREK) constitute a propeptide that is removed on maturation. 3 disulfide bridges follow: cysteine 32-cysteine 44, cysteine 33-cysteine 42, and cysteine 38-cysteine 45.

Belongs to the conotoxin M superfamily. As to expression, expressed by the venom duct.

The protein resides in the secreted. This chain is Conotoxin reg3.12, found in Conus regius (Crown cone).